The primary structure comprises 241 residues: General transcription factor IIF subunit 2 (241 aa).

The protein belongs to the TFIIF beta subunit family. Heterodimer of an alpha and a beta subunit.

The protein localises to the nucleus. TFIIF is a general transcription initiation factor that binds to RNA polymerase II and helps to recruit it to the initiation complex in collaboration with TFIIB. The chain is General transcription factor IIF subunit 2 (gtf2f2) from Dictyostelium discoideum (Social amoeba).